Here is a 392-residue protein sequence, read N- to C-terminus: Elongation factor Tu (392 aa).

In terms of domain architecture, tr-type G spans 10–202 (KVHVNVGTIG…VLDEYIEDPI (193 aa)). The interval 19 to 26 (GHVDHGKT) is G1. 19 to 26 (GHVDHGKT) provides a ligand contact to GTP. Threonine 26 contacts Mg(2+). Residues 60–64 (GITIN) are G2. The tract at residues 81-84 (DCPG) is G3. Residues 81–85 (DCPGH) and 136–139 (NKCD) each bind GTP. The segment at 136-139 (NKCD) is G4. The G5 stretch occupies residues 174–176 (SAL).

Belongs to the TRAFAC class translation factor GTPase superfamily. Classic translation factor GTPase family. EF-Tu/EF-1A subfamily. As to quaternary structure, monomer.

The protein resides in the cytoplasm. It carries out the reaction GTP + H2O = GDP + phosphate + H(+). Functionally, GTP hydrolase that promotes the GTP-dependent binding of aminoacyl-tRNA to the A-site of ribosomes during protein biosynthesis. The sequence is that of Elongation factor Tu from Apple proliferation phytoplasma.